A 459-amino-acid polypeptide reads, in one-letter code: MRTAWVAKRQGQTNVSQMHYARKGVITEEMDYVAKRENLPVELIKDEVARGRMIIPANINHTNLEPMAIGIASKCKVNANIGASPNSSNIDEEVEKLLLSVKYGADTVMDLSTGGGDLDVIRTAIINASPVPIGTVPIYQALESVHGSIENLTPDDFLHIIEKHAQQGVDYMTIHAGLLIEYLPLVKSRITGIVSRGGGIIAKWMLHHHKQNPLYTHFDEIIEIFKKYDVSFSLGDSLRPGCTHDASDDAQLSELKTLGQLTRRAWEHDVQVMVEGPGHVPIDQIEFNVKKQMEECSEAPFYVLGPLVTDIAPGYDHITSAIGAAIAGWHGTAMLCYVTPKEHLGLPNAEDVRNGLIAYKIAAHAADIARHRPGARDRDDELSKARYNFDWNRQFELSLDPERAKEYHDETLPADIYKTAEFCSMCGPKFCPMQTKVDAEMLEELEVFLAKDKEMVSQR.

Substrate is bound by residues Asn-80, Met-109, Tyr-139, His-175, 195-197 (SRG), 236-239 (DSLR), and Glu-275. Residue His-279 coordinates Zn(2+). Residue Tyr-302 participates in substrate binding. His-343 is a Zn(2+) binding site. Cys-423, Cys-426, and Cys-431 together coordinate [4Fe-4S] cluster.

This sequence belongs to the ThiC family. The cofactor is [4Fe-4S] cluster.

The catalysed reaction is 5-amino-1-(5-phospho-beta-D-ribosyl)imidazole + S-adenosyl-L-methionine = 4-amino-2-methyl-5-(phosphooxymethyl)pyrimidine + CO + 5'-deoxyadenosine + formate + L-methionine + 3 H(+). It functions in the pathway cofactor biosynthesis; thiamine diphosphate biosynthesis. Its function is as follows. Catalyzes the synthesis of the hydroxymethylpyrimidine phosphate (HMP-P) moiety of thiamine from aminoimidazole ribotide (AIR) in a radical S-adenosyl-L-methionine (SAM)-dependent reaction. The chain is Phosphomethylpyrimidine synthase from Synechocystis sp. (strain ATCC 27184 / PCC 6803 / Kazusa).